The sequence spans 198 residues: Transmembrane protein 17 (198 aa).

2 N-linked (GlcNAc...) asparagine glycosylation sites follow: asparagine 13 and asparagine 23. The next 4 membrane-spanning stretches (helical) occupy residues 45-65 (MSLY…IMML), 78-98 (FIVV…LYLG), 110-130 (LAGF…FLLF), and 142-162 (AVHI…FLTL).

The protein belongs to the TMEM17 family. As to quaternary structure, part of the tectonic-like complex (also named B9 complex).

Its subcellular location is the cell projection. The protein resides in the cilium membrane. In terms of biological role, transmembrane component of the tectonic-like complex, a complex localized at the transition zone of primary cilia and acting as a barrier that prevents diffusion of transmembrane proteins between the cilia and plasma membranes. Required for ciliogenesis and sonic hedgehog/SHH signaling. This chain is Transmembrane protein 17 (TMEM17), found in Bos taurus (Bovine).